Here is a 187-residue protein sequence, read N- to C-terminus: dCTP deaminase (187 aa).

Residues 110 to 115, 134 to 136, Gln-155, Tyr-169, and Gln-179 each bind dCTP; these read KSTYAR and TLE. The Proton donor/acceptor role is filled by Glu-136.

It belongs to the dCTP deaminase family. Homotrimer.

The enzyme catalyses dCTP + H2O + H(+) = dUTP + NH4(+). It participates in pyrimidine metabolism; dUMP biosynthesis; dUMP from dCTP (dUTP route): step 1/2. Functionally, catalyzes the deamination of dCTP to dUTP. In Bordetella petrii (strain ATCC BAA-461 / DSM 12804 / CCUG 43448), this protein is dCTP deaminase.